The following is a 169-amino-acid chain: Mu-like prophage FluMu host-nuclease inhibitor protein gam (169 aa).

This sequence to phage Mu protein gam.

Functionally, protects linear double-stranded DNA of Mu genome from exonuclease degradation. This Haemophilus influenzae (strain ATCC 51907 / DSM 11121 / KW20 / Rd) protein is Mu-like prophage FluMu host-nuclease inhibitor protein gam.